A 339-amino-acid chain; its full sequence is Polyhydroxybutyrate depolymerase (339 aa).

Residues 1–20 (MFDSVKIAWLVALGAAQVAA) form the signal peptide. Serine 39 is a catalytic residue. Cysteine 70 and cysteine 79 are oxidised to a cystine. Aspartate 121 is an active-site residue. N-linked (GlcNAc...) asparagine glycosylation is present at asparagine 144. Histidine 155 is an active-site residue. Cystine bridges form between cysteine 169/cysteine 180, cysteine 234/cysteine 241, and cysteine 250/cysteine 304. (3R)-hydroxybutanoate trimer is bound at residue tryptophan 307.

Belongs to the carbohydrate esterase 1 (CE1) family.

It localises to the secreted. The enzyme catalyses [(3R)-hydroxybutanoate](n) + H2O = [(3R)-hydroxybutanoate](n-1) + (R)-3-hydroxybutanoate + H(+). The enzyme is completely inhibited by dithiothreitol (DTT) and diisopropylfluorophosphate (DFP), and partially inhibited by HgCl(2) and by enzyme3-(p-nitrophenoxy)propane (EPNP). Activity is not affected by N-ethylmaleimide (NEM) or phenylmethylsulfonyl fluoride (PMSF). Its function is as follows. Esterase involved in the hydrolysis of polyhydroxybutyrate, a microbial polyester that can be produced from renewable resources. In Talaromyces funiculosus (Fruitlet core rot fungus), this protein is Polyhydroxybutyrate depolymerase.